We begin with the raw amino-acid sequence, 661 residues long: PAN2-PAN3 deadenylation complex subunit pan3 (661 aa).

2 disordered regions span residues 1–29 and 53–131; these read MASV…NAKD and DPHK…RQDA. The segment at 26-55 adopts a C3H1-type zinc-finger fold; sequence NAKDTLCRNVTIYGRCRYEDKGCAFNHDPH. Positions 63–83 match the PABPC-interacting motif-2 (PAM-2) motif; sequence NASKKRFNVDSPSFTPSLLPS. Residues 77-104 are compositionally biased toward low complexity; that stretch reads TPSLLPSNGSSPTSSSSSLKKSSTISPK. The span at 115–126 shows a compositional bias: polar residues; sequence TAASRSNTSTPG. The tract at residues 263 to 524 is pseudokinase domain; sequence QTLPNTQLPA…NIDILINGIS (262 aa). Residues arginine 315, 364 to 371, and 424 to 425 each bind ATP; these read DYHPLSKT and SK. A coiled-coil region spans residues 525-563; the sequence is SQLMSTFDSALHLDDQLTSDLGRELENGRLVRLLTKLNF. The tract at residues 564-661 is knob domain; the sequence is INERPEHEHD…ALLRPSRRPH (98 aa).

The protein belongs to the protein kinase superfamily. PAN3 family. Homodimer. Forms a heterotrimer with a catalytic subunit pan2 to form the poly(a)-nuclease (PAN) deadenylation complex. Interacts (via PAM-2 motif) with poly(A)-binding protein pab1 (via PABC domain), conferring substrate specificity of the enzyme complex.

It localises to the cytoplasm. Functionally, regulatory subunit of the poly(A)-nuclease (PAN) deadenylation complex, one of two cytoplasmic mRNA deadenylases involved in mRNA turnover. PAN specifically shortens poly(A) tails of RNA and the activity is stimulated by poly(A)-binding protein pab1. PAN deadenylation is followed by rapid degradation of the shortened mRNA tails by the CCR4-NOT complex. Deadenylated mRNAs are then degraded by two alternative mechanisms, namely exosome-mediated 3'-5' exonucleolytic degradation, or deadenylation-dependent mRNA decaping and subsequent 5'-3' exonucleolytic degradation by XRN1. May also be involved in post-transcriptional maturation of mRNA poly(A) tails. pan3 acts as a positive regulator for PAN activity, recruiting the catalytic subunit pan2 to mRNA via its interaction with RNA and with pab1. This is PAN2-PAN3 deadenylation complex subunit pan3 from Emericella nidulans (strain FGSC A4 / ATCC 38163 / CBS 112.46 / NRRL 194 / M139) (Aspergillus nidulans).